We begin with the raw amino-acid sequence, 99 residues long: DNA-directed RNA polymerase subunit omega (99 aa).

Belongs to the RNA polymerase subunit omega family. In terms of assembly, the RNAP catalytic core consists of 2 alpha, 1 beta, 1 beta' and 1 omega subunit. When a sigma factor is associated with the core the holoenzyme is formed, which can initiate transcription.

It catalyses the reaction RNA(n) + a ribonucleoside 5'-triphosphate = RNA(n+1) + diphosphate. Functionally, promotes RNA polymerase assembly. Latches the N- and C-terminal regions of the beta' subunit thereby facilitating its interaction with the beta and alpha subunits. This chain is DNA-directed RNA polymerase subunit omega, found in Xanthomonas oryzae pv. oryzae (strain MAFF 311018).